A 212-amino-acid chain; its full sequence is Large ribosomal subunit protein uL3 (212 aa).

The segment at 135–156 is disordered; the sequence is MTHGNSRSHRVPGSIGQNQSPG. An N5-methylglutamine modification is found at Gln-153.

Belongs to the universal ribosomal protein uL3 family. As to quaternary structure, part of the 50S ribosomal subunit. Forms a cluster with proteins L14 and L19. In terms of processing, methylated by PrmB.

In terms of biological role, one of the primary rRNA binding proteins, it binds directly near the 3'-end of the 23S rRNA, where it nucleates assembly of the 50S subunit. This Tolumonas auensis (strain DSM 9187 / NBRC 110442 / TA 4) protein is Large ribosomal subunit protein uL3.